The following is a 27-amino-acid chain: Pyruvate dehydrogenase protein X component, mitochondrial (27 aa).

The segment at 1–27 (FRLSPAARNILEKHSLDASQGTATGPR) is disordered. One can recognise a Peripheral subunit-binding (PSBD) domain in the interval 2 to 27 (RLSPAARNILEKHSLDASQGTATGPR). Lys13 bears the N6-acetyllysine mark. Ser15 is modified (phosphoserine). The segment covering 17–27 (DASQGTATGPR) has biased composition (polar residues).

This sequence belongs to the 2-oxoacid dehydrogenase family. Part of the inner core of the multimeric pyruvate dehydrogenase complex that is composed of about 48 DLAT and 12 PDHX molecules. This core binds multiple copies of pyruvate dehydrogenase (subunits PDH1A and PDHB, E1), dihydrolipoamide acetyltransferase (DLAT, E2) and lipoamide dehydrogenase (DLD, E3). Interacts with SIRT4. Interacts with DLD.

The protein localises to the mitochondrion matrix. Required for anchoring dihydrolipoamide dehydrogenase (E3) to the dihydrolipoamide transacetylase (E2) core of the pyruvate dehydrogenase complexes of eukaryotes. This specific binding is essential for a functional PDH complex. The sequence is that of Pyruvate dehydrogenase protein X component, mitochondrial from Mesocricetus auratus (Golden hamster).